The chain runs to 568 residues: Pyruvate carboxylase subunit B (568 aa).

One can recognise a Pyruvate carboxyltransferase domain in the interval Ile4–Lys264. Substrate contacts are provided by residues Arg12–Gln16 and Arg83. Asp13 lines the a divalent metal cation pocket. 3 residues coordinate a divalent metal cation: Lys174, His203, and His205. Lys174 bears the N6-carboxylysine mark. Thr339 is a binding site for substrate. In terms of domain architecture, Biotinyl-binding spans Pro493–Lys568. Position 534 is an N6-biotinyllysine (Lys534).

In terms of assembly, heterooctamer of four A and four B subunits. The cofactor is Mg(2+). Requires Mn(2+) as cofactor. Co(2+) is required as a cofactor.

The catalysed reaction is hydrogencarbonate + pyruvate + ATP = oxaloacetate + ADP + phosphate + H(+). Inhibited by ADP and alpha-ketoglutarate. Functionally, pyruvate carboxylase catalyzes a 2-step reaction, involving the ATP-dependent carboxylation of the covalently attached biotin in the first step and the transfer of the carboxyl group to pyruvate in the second. This chain is Pyruvate carboxylase subunit B (pycB), found in Methanothermobacter thermautotrophicus (strain ATCC 29096 / DSM 1053 / JCM 10044 / NBRC 100330 / Delta H) (Methanobacterium thermoautotrophicum).